The sequence spans 1198 residues: Potassium/sodium hyperpolarization-activated cyclic nucleotide-gated channel 4 (1198 aa).

Topologically, residues 1–266 are cytoplasmic; that stretch reads MDKLPPSMRK…PYSDFRFYWD (266 aa). Residues 25–183 are disordered; it reads IMDEEEDGEE…PASASCEQPS (159 aa). Positions 26-36 are enriched in acidic residues; it reads MDEEEDGEEEG. A compositionally biased stretch (gly residues) spans 105 to 118; it reads SRGGGSGGAGGGSS. Basic and acidic residues predominate over residues 121–132; sequence HLHDSAEERRLI. S139 is subject to Phosphoserine. The span at 164 to 174 shows a compositional bias: pro residues; sequence ASPPPQQPPQP. The tract at residues 209-260 is involved in subunit assembly; it reads GQSGFMQRQFGAMLQPGVNKFSLRMFGSQKAVEREQERVKSAGFWIIHPYSD. A helical transmembrane segment spans residues 267–287; it reads LTMLLLMVGNLIIIPVGITFF. The Extracellular portion of the chain corresponds to 288–293; it reads KDENTT. A helical transmembrane segment spans residues 294–314; it reads PWIVFNVVSDTFFLIDLVLNF. At 315-340 the chain is on the cytoplasmic side; it reads RTGIVVEDNTEIILDPQRIKMKYLKS. The helical transmembrane segment at 341–361 threads the bilayer; it reads WFVVDFISSIPVDYIFLIVET. The Extracellular portion of the chain corresponds to 362–368; sequence RIDSEVY. A helical; Voltage-sensor membrane pass occupies residues 369 to 389; that stretch reads KTARALRIVRFTKILSLLRLL. Residues 390-420 are Cytoplasmic-facing; the sequence is RLSRLIRYIHQWEEIFHMTYDLASAVVRIVN. A helical membrane pass occupies residues 421 to 441; that stretch reads LIGMMLLLCHWDGCLQFLVPM. The Extracellular segment spans residues 442–464; that stretch reads LQDFPHDCWVSINGMVNNSWGKQ. N-linked (GlcNAc...) asparagine glycosylation occurs at N458. Positions 465-486 form an intramembrane region, pore-forming; sequence YSYALFKAMSHMLCIGYGRQAP. The Extracellular portion of the chain corresponds to 487-496; that stretch reads VGMSDVWLTM. The chain crosses the membrane as a helical span at residues 497-517; sequence LSMIVGATCYAMFIGHATALI. Over 518–1198 the chain is Cytoplasmic; that stretch reads QSLDSSRRQY…PVRSKLPSNL (681 aa). Positions 559, 562, 564, and 566 each coordinate 3',5'-cyclic GMP. 3',5'-cyclic AMP contacts are provided by G659, E660, C662, R669, T670, V673, and R710. The tract at residues 804–1198 is disordered; it reads AIFRPPPGPG…PVRSKLPSNL (395 aa). Composition is skewed to low complexity over residues 831–856 and 866–880; these read SLIP…SSSS and SAPP…SSSS. A compositionally biased stretch (pro residues) spans 881–894; that stretch reads SPPPGACSSPPAPT. Low complexity-rich tracts occupy residues 895-905, 913-937, and 965-985; these read PSTSTAATTTG, LGGS…SPQA, and RSPS…SPGL. A compositionally biased stretch (pro residues) spans 1027–1040; that stretch reads GHSPGPPRTFPSAP. The segment covering 1043–1054 has biased composition (low complexity); sequence ASGSHGSLLLPP. Residues S1103 and S1106 each carry the phosphoserine modification. Residues 1120–1132 are compositionally biased toward gly residues; the sequence is AGGGSGSSGGLGP.

Belongs to the potassium channel HCN family. In terms of assembly, homotetramer. The potassium channel is composed of a homo- or heterotetrameric complex of pore-forming subunits. Interacts with PEX5L with a 4:4 HCN4:PEX5L stoichiometry; reduces the effects of cAMP on the voltage-dependence and rate of activation. Interacts with IRAG1; regulates HCN4 channel activity. Interacts with IRAG2; regulates HCN4 channel activity. In terms of processing, S-palmitoylated. In terms of tissue distribution, highly expressed in pyramidal and granule layer of the hippocampus, in thalamus anterior nucleus, in the supraoptic nucleus in hypothalamus, in cerebellum, and in trapezoid nuclei and superior olivary complex in the auditory system. Detected in a subset of elongated cells in taste buds.

It localises to the cell membrane. It catalyses the reaction K(+)(in) = K(+)(out). It carries out the reaction Na(+)(in) = Na(+)(out). Activated by cAMP and at 100 times higher concentrationsand to a lesser extent by cGMP and cCMP. cAMP binding causes a conformation change that leads to the assembly of an active tetramer and channel opening. Binding of cAMP removes a tonic inhibition conferred by cyclic nucleotide-binding domain (CNBD) on channel opening. Cyclic dinucleotides can modulate HCN4 channel; cyclic dinucleotides acting as potent antagonists of cAMP. Inhibited by extracellular Cs(+) ions. Auxiliary subunits can also regulate HCN4 channel. IRAG1 causes a gain-of-function by shifting HCN4 activation to more depolarized membrane potentials in the absence of cAMP. In contrast, IRAG2 causes a loss-of-function by inhibiting cAMP-dependent potentiation of HCN4 activation. Functionally, hyperpolarization-activated ion channel that are permeable to Na(+) and K(+) ions with very slow activation and inactivation. Exhibits higher selectivity for K(+) over Na(+) ions. Contributes to the native pacemaker currents in heart (If) that regulate the rhythm of heart beat. Contributes to the native pacemaker currents in neurons (Ih). May mediate responses to sour stimuli. The chain is Potassium/sodium hyperpolarization-activated cyclic nucleotide-gated channel 4 (Hcn4) from Rattus norvegicus (Rat).